The sequence spans 256 residues: Global transcriptional regulator CodY (256 aa).

Positions 1 to 155 (MSLLSKTREL…AATVIGMEIL (155 aa)) are GAF domain. A DNA-binding region (H-T-H motif) is located at residues 203–222 (ASKVADRVGITRSVIVNALR).

It belongs to the CodY family.

Its subcellular location is the cytoplasm. In terms of biological role, DNA-binding global transcriptional regulator which is involved in the adaptive response to starvation and acts by directly or indirectly controlling the expression of numerous genes in response to nutrient availability. During rapid exponential growth, CodY is highly active and represses genes whose products allow adaptation to nutrient depletion. This is Global transcriptional regulator CodY from Staphylococcus epidermidis (strain ATCC 35984 / DSM 28319 / BCRC 17069 / CCUG 31568 / BM 3577 / RP62A).